Reading from the N-terminus, the 207-residue chain is Imidazoleglycerol-phosphate dehydratase (207 aa).

It belongs to the imidazoleglycerol-phosphate dehydratase family.

The protein localises to the cytoplasm. It carries out the reaction D-erythro-1-(imidazol-4-yl)glycerol 3-phosphate = 3-(imidazol-4-yl)-2-oxopropyl phosphate + H2O. It functions in the pathway amino-acid biosynthesis; L-histidine biosynthesis; L-histidine from 5-phospho-alpha-D-ribose 1-diphosphate: step 6/9. The sequence is that of Imidazoleglycerol-phosphate dehydratase (hisB) from Azospirillum brasilense.